The primary structure comprises 159 residues: Ribosomal RNA large subunit methyltransferase H (159 aa).

S-adenosyl-L-methionine is bound by residues Leu-76, Gly-108, and 127 to 132 (FSKMTF).

The protein belongs to the RNA methyltransferase RlmH family. In terms of assembly, homodimer.

It is found in the cytoplasm. The catalysed reaction is pseudouridine(1915) in 23S rRNA + S-adenosyl-L-methionine = N(3)-methylpseudouridine(1915) in 23S rRNA + S-adenosyl-L-homocysteine + H(+). Functionally, specifically methylates the pseudouridine at position 1915 (m3Psi1915) in 23S rRNA. The chain is Ribosomal RNA large subunit methyltransferase H from Exiguobacterium sibiricum (strain DSM 17290 / CCUG 55495 / CIP 109462 / JCM 13490 / 255-15).